A 659-amino-acid chain; its full sequence is Ion-translocating oxidoreductase complex subunit C (659 aa).

4Fe-4S ferredoxin-type domains are found at residues 366 to 397 (TEMG…QQLY) and 407 to 436 (KARN…VQYY). Residues Cys-377, Cys-380, Cys-383, Cys-387, Cys-416, Cys-419, Cys-422, and Cys-426 each contribute to the [4Fe-4S] cluster site.

The protein belongs to the 4Fe4S bacterial-type ferredoxin family. RnfC subfamily. The complex is composed of six subunits: RnfA, RnfB, RnfC, RnfD, RnfE and RnfG. [4Fe-4S] cluster is required as a cofactor.

The protein localises to the cell inner membrane. Its function is as follows. Part of a membrane-bound complex that couples electron transfer with translocation of ions across the membrane. The sequence is that of Ion-translocating oxidoreductase complex subunit C from Yersinia pseudotuberculosis serotype IB (strain PB1/+).